Reading from the N-terminus, the 406-residue chain is Putative nickel insertion protein (406 aa).

The protein belongs to the LarC family.

The polypeptide is Putative nickel insertion protein (Thermomicrobium roseum (strain ATCC 27502 / DSM 5159 / P-2)).